The sequence spans 479 residues: Phosphoglycerate kinase, glycosomal (479 aa).

(2R)-3-phosphoglycerate contacts are provided by Val-23, Asp-24, Phe-25, Asn-26, Arg-39, Ser-61, His-62, Gly-64, Arg-65, Arg-132, His-168, and Arg-169. 2 residues coordinate ADP: Gly-214 and Ala-215. CDP is bound at residue Gly-214. 2 residues coordinate AMP: Ala-215 and Lys-216. Ala-215 serves as a coordination point for ATP. A Mg(2+)-binding site is contributed by Ala-215. Lys-216 contributes to the (2R)-3-phosphoglycerate binding site. Asp-219 is a binding site for CDP. Asp-219 is a Mg(2+) binding site. Residues Lys-220 and Gly-238 each contribute to the ADP site. Residue Lys-220 coordinates AMP. Residue Lys-220 coordinates ATP. Residue Gly-238 participates in CDP binding. The AMP site is built by Ala-239 and Ala-311. 2 residues coordinate ATP: Ala-239 and Ala-311. ADP contacts are provided by Ala-311 and Asn-335. The CDP site is built by Gly-336 and Phe-341. Phe-341, Glu-342, Asp-374, and Thr-375 together coordinate ADP. Residue Glu-342 participates in AMP binding. ATP-binding residues include Glu-342, Asp-374, and Thr-375. Asp-374 serves as a coordination point for Mg(2+).

This sequence belongs to the phosphoglycerate kinase family. Monomer. Mg(2+) serves as cofactor.

Its subcellular location is the glycosome. The catalysed reaction is (2R)-3-phosphoglycerate + ATP = (2R)-3-phospho-glyceroyl phosphate + ADP. Its pathway is carbohydrate degradation; glycolysis; pyruvate from D-glyceraldehyde 3-phosphate: step 2/5. The sequence is that of Phosphoglycerate kinase, glycosomal (PGKC) from Leishmania mexicana.